The sequence spans 250 residues: Small ribosomal subunit protein uS3z (250 aa).

Residues 21-92 (LNEVLTRELA…SVELYAEKVN (72 aa)) enclose the KH type-2 domain.

Belongs to the universal ribosomal protein uS3 family. In terms of assembly, interacts with SNRNP35.

The chain is Small ribosomal subunit protein uS3z (RPS3A) from Arabidopsis thaliana (Mouse-ear cress).